We begin with the raw amino-acid sequence, 386 residues long: MKIHEYQGKELLKQFGVPVPRGIPAFSVEEAVAAAEKLGGPVWVVKAQIHAGGRGKGGGVKLARSLDEVRQLASQILGMQLVTHQTGAQGQKVNRLYIEDGADIQKEYYVSLVTDRGTQKVALIASSEGGMDIEEVAHSTPEKIITEYIDPIVGLTDAQAKKVADAIGMPADSTAQAVDVFKKLYQCYMDTDASLVEINPLNRDSKGNIIALDAKFNFDSNALFRHPEIVAYRDLDEEDPAEIEASKFDLAYIQLDGNIGCLVNGAGLAMATMDTIKLFGGEPANFLDVGGGATAEKVTEAFKIMLKNKGVKAILVNIFGGIMRCDVIAEGVISACKAVNLSVPLVVRMKGTNEELGKKMLAESGLPIISADTMAEAATKVVAAAK.

The region spanning 9 to 244 (KELLKQFGVP…LDEEDPAEIE (236 aa)) is the ATP-grasp domain. ATP contacts are provided by residues Lys46, 53–55 (GRG), Glu99, Ala102, and Glu107. Positions 199 and 213 each coordinate Mg(2+). Substrate contacts are provided by residues Asn264 and 321-323 (GIM).

The protein belongs to the succinate/malate CoA ligase beta subunit family. As to quaternary structure, heterotetramer of two alpha and two beta subunits. The cofactor is Mg(2+).

It catalyses the reaction succinate + ATP + CoA = succinyl-CoA + ADP + phosphate. The catalysed reaction is GTP + succinate + CoA = succinyl-CoA + GDP + phosphate. It functions in the pathway carbohydrate metabolism; tricarboxylic acid cycle; succinate from succinyl-CoA (ligase route): step 1/1. Its function is as follows. Succinyl-CoA synthetase functions in the citric acid cycle (TCA), coupling the hydrolysis of succinyl-CoA to the synthesis of either ATP or GTP and thus represents the only step of substrate-level phosphorylation in the TCA. The beta subunit provides nucleotide specificity of the enzyme and binds the substrate succinate, while the binding sites for coenzyme A and phosphate are found in the alpha subunit. This chain is Succinate--CoA ligase [ADP-forming] subunit beta, found in Bordetella avium (strain 197N).